The chain runs to 213 residues: Amelogenin, X isoform (213 aa).

An N-terminal signal peptide occupies residues 1 to 16 (MGTWILFACLLGAAFS). The residue at position 32 (serine 32) is a Phosphoserine. 2 stretches are compositionally biased toward low complexity: residues 96–105 (VPQQPMMPVP) and 114–160 (QHHQ…QPLQ). The segment at 96 to 213 (VPQQPMMPVP…TDKTKREEVD (118 aa)) is disordered. Residues 161–194 (PLQPQPPVHPIQPLPPQPPLPPIFPMQPLPPMLP) show a composition bias toward pro residues.

The protein belongs to the amelogenin family. As to quaternary structure, interacts with KRT5. In terms of processing, phosphorylated by FAM20C in vitro.

It is found in the secreted. Its subcellular location is the extracellular space. The protein localises to the extracellular matrix. Plays a role in the biomineralization of teeth. Seems to regulate the formation of crystallites during the secretory stage of tooth enamel development. Thought to play a major role in the structural organization and mineralization of developing enamel. This Bos taurus (Bovine) protein is Amelogenin, X isoform (AMELX).